A 786-amino-acid chain; its full sequence is LPS-assembly protein LptD (786 aa).

The N-terminal stretch at 1–39 (MPPKPLFPNVFPGDGAPRKRRLALALLAVPGLVPAVSYA) is a signal peptide. Positions 767–786 (PGYTPLPPPPPPMSRFSNYE) are disordered. The span at 770-779 (TPLPPPPPPM) shows a compositional bias: pro residues.

Belongs to the LptD family. As to quaternary structure, component of the lipopolysaccharide transport and assembly complex. Interacts with LptE and LptA.

It is found in the cell outer membrane. Functionally, together with LptE, is involved in the assembly of lipopolysaccharide (LPS) at the surface of the outer membrane. The polypeptide is LPS-assembly protein LptD (Burkholderia cenocepacia (strain HI2424)).